The sequence spans 1528 residues: 5'-3' exoribonuclease 1 (1528 aa).

3 disordered regions span residues 1246–1331 (SKKA…KSSE), 1431–1455 (PPPA…NVSD), and 1470–1528 (LKKF…DEST). The segment covering 1274–1304 (QSEEKLRKERAHDLLNFIKKDTNEKNSESVD) has biased composition (basic and acidic residues). Positions 1317–1326 (AKKVLLKRPA) are enriched in basic residues. A compositionally biased stretch (polar residues) spans 1500–1517 (SSGTNSTECQSPKSQSNA). Phosphothreonine is present on Thr1506. Ser1510 is subject to Phosphoserine. Residues 1518-1528 (ADRDNKKDEST) are compositionally biased toward basic and acidic residues.

This sequence belongs to the 5'-3' exonuclease family. Mg(2+) is required as a cofactor.

It localises to the cytoplasm. The protein localises to the perinuclear region. The protein resides in the P-body. Its activity is regulated as follows. 3'-phosphoadenosine 5'-phosphate (pAp) is an inhibitor of KEM1. Sodium-induced GCN4 expression reduces pAp accumulation by activating HAL2 expression, and therefore maintains mRNA degradation capacity which is likely to be important for the accurate and rapid adaptation of gene expression to salt stress. In terms of biological role, multifunctional protein that exhibits several independent functions at different levels of the cellular processes. 5'-3' exonuclease component of the nonsense-mediated mRNA decay (NMD) which is a highly conserved mRNA degradation pathway, an RNA surveillance system whose role is to identify and rid cells of mRNA with premature termination codons and thus prevents accumulation of potentially harmful truncated proteins. The NMD pathway has a second role regulating the decay of wild-type mRNAs, and especially mRNAs that are important for telomere functions. Participate in CTH2-mediated and VTS1-mediated mRNA turnover. Involved in the degradation of several hypomodified mature tRNA species and participates in the 5'-processing or the degradation of the snoRNA precursors and rRNA processing. Involved in defense against virus and suppresses viral RNA recombination by rapidly removing the 5'-truncated RNAs, the substrates of recombination, and thus reducing the chance for recombination to occur in the parental strain. Required for the assembly of the virus-like particles of the Ty3 retrotransposon and contributes to the efficient generation of narnavirus 20S RNA by playing a major role in the elimination of the non-viral upstream sequences from the primary transcripts. Degrades single-stranded DNA (ss-DNA) and can renature complementary ss-DNA as well as catalyzes the formation of heteroduplex DNA from circular ss-DNA and homologous linear ds-DNA in vitro. Acts as a microtubule-associated protein which interacts with cytoplasmic microtubules through beta-tubulin and promotes in vitro assembly of tubulin into microtubules. Associates with microtubule functions such as chromosome transmission, nuclear migration, and SPB duplication. Has also a role in G1 to S transition and is involved in nuclear fusion during karyogamy. Required for the expression of ROK1 at the post-transcriptional level and for the alpha-factor induction of the karyogamy genes KAR3 and KAR4. Plays a role in filamentous growth. The protein is 5'-3' exoribonuclease 1 (XRN1) of Saccharomyces cerevisiae (strain ATCC 204508 / S288c) (Baker's yeast).